The chain runs to 150 residues: UPF0178 protein Shew_2726 (150 aa).

Belongs to the UPF0178 family.

In Shewanella loihica (strain ATCC BAA-1088 / PV-4), this protein is UPF0178 protein Shew_2726.